A 132-amino-acid chain; its full sequence is Small ribosomal subunit protein uS8 (132 aa).

It belongs to the universal ribosomal protein uS8 family. Part of the 30S ribosomal subunit. Contacts proteins S5 and S12.

In terms of biological role, one of the primary rRNA binding proteins, it binds directly to 16S rRNA central domain where it helps coordinate assembly of the platform of the 30S subunit. The sequence is that of Small ribosomal subunit protein uS8 from Geobacillus thermodenitrificans (strain NG80-2).